The chain runs to 334 residues: Protein RecA (334 aa).

65–72 (GNESSGKT) provides a ligand contact to ATP.

The protein belongs to the RecA family.

It localises to the cytoplasm. Its function is as follows. Can catalyze the hydrolysis of ATP in the presence of single-stranded DNA, the ATP-dependent uptake of single-stranded DNA by duplex DNA, and the ATP-dependent hybridization of homologous single-stranded DNAs. It interacts with LexA causing its activation and leading to its autocatalytic cleavage. This is Protein RecA from Ureaplasma parvum serovar 3 (strain ATCC 27815 / 27 / NCTC 11736).